Reading from the N-terminus, the 945-residue chain is Isoleucine--tRNA ligase (945 aa).

Positions 66–76 (PYANGDIHLGH) match the 'HIGH' region motif. Glu581 is a binding site for L-isoleucyl-5'-AMP. Positions 622–626 (KMSKS) match the 'KMSKS' region motif. Lys625 contributes to the ATP binding site. Zn(2+)-binding residues include Cys908, Cys911, Cys928, and Cys931.

This sequence belongs to the class-I aminoacyl-tRNA synthetase family. IleS type 1 subfamily. In terms of assembly, monomer. It depends on Zn(2+) as a cofactor.

The protein resides in the cytoplasm. It carries out the reaction tRNA(Ile) + L-isoleucine + ATP = L-isoleucyl-tRNA(Ile) + AMP + diphosphate. Functionally, catalyzes the attachment of isoleucine to tRNA(Ile). As IleRS can inadvertently accommodate and process structurally similar amino acids such as valine, to avoid such errors it has two additional distinct tRNA(Ile)-dependent editing activities. One activity is designated as 'pretransfer' editing and involves the hydrolysis of activated Val-AMP. The other activity is designated 'posttransfer' editing and involves deacylation of mischarged Val-tRNA(Ile). In Paraburkholderia phytofirmans (strain DSM 17436 / LMG 22146 / PsJN) (Burkholderia phytofirmans), this protein is Isoleucine--tRNA ligase.